The sequence spans 225 residues: Venom allergen 5 (225 aa).

The N-terminal stretch at 1–23 (MKISGFVYLILITTIINLSFSEA) is a signal peptide. 4 disulfides stabilise this stretch: cysteine 27/cysteine 39, cysteine 31/cysteine 124, cysteine 49/cysteine 117, and cysteine 191/cysteine 208. An SCP domain is found at 69-210 (KQHNEFRQKV…WHRHYLVCNY (142 aa)).

It belongs to the CRISP family. Venom allergen 5-like subfamily. As to expression, expressed by the venom gland.

Its subcellular location is the secreted. This is Venom allergen 5 from Vespa magnifica (Hornet).